The following is a 129-amino-acid chain: Large-conductance mechanosensitive channel (129 aa).

3 consecutive transmembrane segments (helical) span residues 14 to 34, 38 to 58, and 67 to 87; these read IIDLAVAVVIGGAFGKIVTSL, IIMPLVGVLTGGIDLTASFVY, and LGVFLQSIIDFLIIAFAIFMA.

It belongs to the MscL family. In terms of assembly, homopentamer.

It is found in the cell membrane. In terms of biological role, channel that opens in response to stretch forces in the membrane lipid bilayer. May participate in the regulation of osmotic pressure changes within the cell. This chain is Large-conductance mechanosensitive channel, found in Lysinibacillus sphaericus (strain C3-41).